The primary structure comprises 282 residues: Pantothenate synthetase (282 aa).

Position 30–37 (30–37) interacts with ATP; sequence MGYLHEGH. The active-site Proton donor is the H37. Q61 contributes to the (R)-pantoate binding site. Q61 contacts beta-alanine. 147–150 contributes to the ATP binding site; the sequence is GMKD. Residue Q153 participates in (R)-pantoate binding. Residues V176 and 184 to 187 each bind ATP; that span reads KSSR.

This sequence belongs to the pantothenate synthetase family. As to quaternary structure, homodimer.

The protein localises to the cytoplasm. It carries out the reaction (R)-pantoate + beta-alanine + ATP = (R)-pantothenate + AMP + diphosphate + H(+). Its pathway is cofactor biosynthesis; (R)-pantothenate biosynthesis; (R)-pantothenate from (R)-pantoate and beta-alanine: step 1/1. Catalyzes the condensation of pantoate with beta-alanine in an ATP-dependent reaction via a pantoyl-adenylate intermediate. In Bacillus thuringiensis subsp. konkukian (strain 97-27), this protein is Pantothenate synthetase.